Here is a 695-residue protein sequence, read N- to C-terminus: Follicle-stimulating hormone receptor (695 aa).

The first 17 residues, 1-17 (MSLLLVSLLAFLTLGSG), serve as a signal peptide directing secretion. 2 cysteine pairs are disulfide-bonded: Cys-18–Cys-25 and Cys-23–Cys-32. The region spanning 18–46 (CHHRICHCSNGVFLCQESKVTEIPPDLPR) is the LRRNT domain. Residues 18-366 (CHHRICHCSN…EDIMGHDILR (349 aa)) are Extracellular-facing. LRR repeat units follow at residues 49-72 (VELR…FGDL), 73-97 (EKIE…LPKL), 98-118 (HEIR…AFQN), 119-143 (LPNL…KIQS), 144-169 (LQKV…VGLS), 170-192 (FESM…AFNG), 193-216 (TQLD…VFQG), 217-240 (ASGP…GLEN), and 241-259 (LKKL…PSLE). 2 N-linked (GlcNAc...) asparagine glycosylation sites follow: Asn-191 and Asn-199. Disulfide bonds link Cys-275/Cys-346, Cys-276/Cys-292, Cys-276/Cys-356, and Cys-292/Cys-338. Asn-293 carries an N-linked (GlcNAc...) asparagine glycan. Sulfotyrosine is present on Tyr-335. Residues 367–387 (VLIWFISILAITGNIIVLVIL) traverse the membrane as a helical segment. Residues 388–398 (ITSQYKLTVPR) are Cytoplasmic-facing. A helical transmembrane segment spans residues 399–421 (FLMCNLAFADLCIGIYLLLIASV). Topologically, residues 422–443 (DIHTKTQYHNYAIDWQTGAGCD) are extracellular. Cysteines 442 and 517 form a disulfide. Residues 444–465 (AAGFFTVFASELSVYTLTAITL) traverse the membrane as a helical segment. The Cytoplasmic segment spans residues 466 to 485 (ERWHTITHAMQLQCKVQLRH). The chain crosses the membrane as a helical span at residues 486 to 508 (AASIMLVGWIFAFTVALFPIFGI). Residues 509-528 (SSYMKVSICLPMDIDSPLSQ) are Extracellular-facing. The chain crosses the membrane as a helical span at residues 529–550 (LYVVSLLVLNVLAFVVICGCYT). At 551–573 (HIYLTVRNPNIMSSSSDTKIAKR) the chain is on the cytoplasmic side. Residues 574–597 (MAMLIFTDFLCMAPISFFAISASL) traverse the membrane as a helical segment. The Extracellular segment spans residues 598-608 (KVPLITVSKSK). A helical transmembrane segment spans residues 609–630 (ILLVLFYPINSCANPFLYAIFT). At 631 to 695 (KNFRRDVFIL…LIPLSRLAQN (65 aa)) the chain is on the cytoplasmic side.

It belongs to the G-protein coupled receptor 1 family. FSH/LSH/TSH subfamily. As to quaternary structure, homotrimer. Functions as a homotrimer binding the FSH hormone heterodimer composed of CGA and FSHB. Interacts with ARRB2. Interacts with APPL2; interaction is independent of follicle stimulating hormone stimulation. N-glycosylated; indirectly required for FSH-binding, possibly via a conformational change that allows high affinity binding of hormone. In terms of processing, sulfated.

The protein localises to the cell membrane. G protein-coupled receptor for follitropin, the follicle-stimulating hormone. Through cAMP production activates the downstream PI3K-AKT and ERK1/ERK2 signaling pathways. The protein is Follicle-stimulating hormone receptor (FSHR) of Sus scrofa (Pig).